The primary structure comprises 443 residues: MLKNSHIYIIWLFGFISGFNVMITGNTLNYWFAKKDIALQTIGMLSFITLPYSINFLLAPVFDTVQIKYLNKILGHRLSWICLTSTTLISLIFILSFLDPSTDLVLLSFIAFIISFFSAAQDTILSALRTKIVPKESLGFTSGIYILGYRVGMLLASSGAIYLSIYLTFNAIYKIFAGVIFVYLILLILVARYTNSFDVMEENTSYSYVARCYAIADMNLKNKFFIKNYFNYFKNFISAYLLKIFSGFYFHRNDINLAYYIILILIFLVLYRLPDNLINVMINPFLLHLGYNAFEIASVCKFCGVMGAIIGGLIGGIIMKYKNILYSILLFGIIHALSHIFFILLEINGKNSLILFITIGVESITGGMTMTAYIAFISSLCQGKFRATQYSLLSSMMGISRSIFPIISGYMVVNFGWQNFFLFTTIITIPSLLILLKIKTKIN.

The next 13 membrane-spanning stretches (helical) occupy residues 5-25 (SHIY…MITG), 42-62 (IGML…APVF), 78-98 (LSWI…LSFL), 104-124 (LVLL…QDTI), 143-163 (GIYI…AIYL), 171-191 (AIYK…ILVA), 230-250 (FNYF…GFYF), 254-274 (DINL…YRLP), 299-319 (VCKF…GIIM), 324-344 (ILYS…FFIL), 354-374 (ILFI…TAYI), 393-413 (LSSM…YMVV), and 415-435 (FGWQ…LLIL).

The protein belongs to the major facilitator superfamily.

The protein localises to the cell inner membrane. This chain is Putative transporter AmpG 1 (ampG1), found in Rickettsia prowazekii (strain Madrid E).